The chain runs to 880 residues: GATOR2 complex protein MIOS-A (880 aa).

WD repeat units lie at residues 60–102, 113–157, 185–224, 226–264, 268–309, and 399–441; these read SDTP…NSKC, KHAR…TPEV, GQND…QKMF, NTKA…KPVL, EQPK…TPIG, and RLRA…KQYA. A C4-type zinc finger spans residues 740–786; the sequence is VSCNFCGKSISYSCSSVPHQGRGFSQYGVSGSPTKSKFTSCPGCRKP. 13 residues coordinate Zn(2+): Cys742, Cys745, Cys780, Cys783, Cys793, Cys832, Cys835, His837, His840, His843, Cys854, Cys859, and Cys863. The segment at 787–868 adopts an RING-type; atypical zinc-finger fold; it reads LPRCALCLIN…CSCKCMQLDT (82 aa).

This sequence belongs to the WD repeat mio family. As to quaternary structure, component of the GATOR2 subcomplex, composed of MIOS, SEC13, SEH1L, WDR24 and WDR59. The GATOR2 complex interacts with CASTOR1 and CASTOR2; the interaction is negatively regulated by arginine. The GATOR2 complex interacts with SESN1, SESN2 and SESN3; the interaction is negatively regulated by amino acids. Interacts with SAR1; the interaction is direct, disrupted by leucine and mediates the interaction of SAR1 with the GATOR2 complex to negatively regulate the TORC1 signaling upon leucine deprivation.

Its subcellular location is the lysosome membrane. The GATOR2 complex is negatively regulated by the upstream amino acid sensors CASTOR1 and SESN2, which sequester the GATOR2 complex in absence of amino acids. In the presence of abundant amino acids, GATOR2 is released from CASTOR1 and SESN2 and activated. As a component of the GATOR2 complex, functions as an activator of the amino acid-sensing branch of the mTORC1 signaling pathway. The GATOR2 complex indirectly activates mTORC1 through the inhibition of the GATOR1 subcomplex. GATOR2 probably acts as an E3 ubiquitin-protein ligase toward GATOR1. In the presence of abundant amino acids, the GATOR2 complex mediates ubiquitination of the NPRL2 core component of the GATOR1 complex, leading to GATOR1 inactivation. In the absence of amino acids, GATOR2 is inhibited, activating the GATOR1 complex. Within the GATOR2 complex, MIOS is required to prevent autoubiquitination of WDR24, the catalytic subunit of the complex. This Xenopus laevis (African clawed frog) protein is GATOR2 complex protein MIOS-A.